Reading from the N-terminus, the 101-residue chain is ATP synthase subunit f, mitochondrial (101 aa).

A mitochondrion-targeting transit peptide spans 1-6; sequence MIFKRA.

This sequence belongs to the ATPase F chain family. As to quaternary structure, F-type ATPases have 2 components, CF(1) - the catalytic core - and CF(0) - the membrane proton channel. In yeast, the dimeric form of ATP synthase consists of 17 polypeptides: alpha, beta, gamma, delta, epsilon, 4 (B), 5 (OSCP), 6 (A), 8, 9 (C), d, E (Tim11), f, g, h, i/j and k.

It localises to the mitochondrion. The protein localises to the mitochondrion inner membrane. Functionally, mitochondrial membrane ATP synthase (F(1)F(0) ATP synthase or Complex V) produces ATP from ADP in the presence of a proton gradient across the membrane which is generated by electron transport complexes of the respiratory chain. F-type ATPases consist of two structural domains, F(1) - containing the extramembraneous catalytic core and F(0) - containing the membrane proton channel, linked together by a central stalk and a peripheral stalk. During catalysis, ATP synthesis in the catalytic domain of F(1) is coupled via a rotary mechanism of the central stalk subunits to proton translocation. Part of the complex F(0) domain. Minor subunit located with subunit a in the membrane. The polypeptide is ATP synthase subunit f, mitochondrial (ATP17) (Saccharomyces cerevisiae (strain ATCC 204508 / S288c) (Baker's yeast)).